The primary structure comprises 237 residues: Orotidine 5'-phosphate decarboxylase (237 aa).

Substrate-binding positions include aspartate 17, lysine 39, 66–75 (DLKLHDIGNT), threonine 121, arginine 182, glutamine 191, glycine 211, and arginine 212. The Proton donor role is filled by lysine 68.

The protein belongs to the OMP decarboxylase family. Type 1 subfamily. Homodimer.

The catalysed reaction is orotidine 5'-phosphate + H(+) = UMP + CO2. It functions in the pathway pyrimidine metabolism; UMP biosynthesis via de novo pathway; UMP from orotate: step 2/2. Its function is as follows. Catalyzes the decarboxylation of orotidine 5'-monophosphate (OMP) to uridine 5'-monophosphate (UMP). The sequence is that of Orotidine 5'-phosphate decarboxylase from Rhodopseudomonas palustris (strain TIE-1).